Consider the following 109-residue polypeptide: Putative double-stranded DNA mimic protein YciU (109 aa).

This sequence belongs to the putative dsDNA mimic protein family.

May act as a double-stranded DNA (dsDNA) mimic. Probably regulates the activity of a dsDNA-binding protein. This chain is Putative double-stranded DNA mimic protein YciU, found in Salmonella arizonae (strain ATCC BAA-731 / CDC346-86 / RSK2980).